Consider the following 486-residue polypeptide: NADH-quinone oxidoreductase subunit N (486 aa).

14 consecutive transmembrane segments (helical) span residues 8 to 28 (LIAL…ILSI), 36 to 56 (FIAF…YFLI), 74 to 94 (ILYI…AYPW), 104 to 124 (EFYL…ISNH), 125 to 145 (MASL…LIAY), 160 to 180 (LVLS…IYAI), 204 to 224 (VLFG…MVPF), 239 to 259 (VLSF…LYFF), 270 to 290 (IFLI…LMAI), 298 to 318 (FFGY…LVSK), 329 to 349 (GIFL…INLF), 374 to 394 (ASIV…LGFF), 407 to 427 (HLWT…YGYL), and 459 to 479 (ILIF…NPLI).

It belongs to the complex I subunit 2 family. As to quaternary structure, NDH-1 is composed of 13 different subunits. Subunits NuoA, H, J, K, L, M, N constitute the membrane sector of the complex.

The protein resides in the cell membrane. The enzyme catalyses a quinone + NADH + 5 H(+)(in) = a quinol + NAD(+) + 4 H(+)(out). NDH-1 shuttles electrons from NADH, via FMN and iron-sulfur (Fe-S) centers, to quinones in the respiratory chain. The immediate electron acceptor for the enzyme in this species is believed to be ubiquinone. Couples the redox reaction to proton translocation (for every two electrons transferred, four hydrogen ions are translocated across the cytoplasmic membrane), and thus conserves the redox energy in a proton gradient. This chain is NADH-quinone oxidoreductase subunit N, found in Buchnera aphidicola subsp. Schizaphis graminum (strain Sg).